Here is a 249-residue protein sequence, read N- to C-terminus: Receptor-transporting protein 4 (249 aa).

At M1–E227 the chain is on the cytoplasmic side. The 3CxxC-type zinc-finger motif lies at T50 to L162. The tract at residues K173–T208 is disordered. Residues T199–T208 are compositionally biased toward polar residues. Residues I228–T248 form a helical membrane-spanning segment.

It belongs to the TMEM7 family. In terms of assembly, interacts with TASR16. Interacts with OPRD1 and OPRM1; the interaction promotes cell surface localization of the OPDR1-OPRM1 heterodimer. Expressed at low levels in olfactory neurons. Upon viral infection, highly expressed in brain and different cells of nervous tissue.

The protein localises to the membrane. The protein resides in the cytoplasm. Its function is as follows. Chaperone protein that facilitates the trafficking and functional cell surface expression of some G-protein coupled receptors (GPCRs). Promotes functional expression of the bitter taste receptor TAS2R16. Also promotes functional expression of the opioid receptor heterodimer OPRD1-OPRM1. In addition, acts as a potent IFN-inducible suppressor of pathogens including lyssavirus rabies, influenza A or yellow fever virus. Mechanistically, associates with the viral replicase, binds viral RNA, and thereby suppresses viral genome amplification that replicates at the endoplasmic reticulum. In addition, restores antiviral signaling by interacting with and sequestering influenza virus protein NS1. This Mus musculus (Mouse) protein is Receptor-transporting protein 4 (Rtp4).